A 1023-amino-acid polypeptide reads, in one-letter code: MGKGVGRDKYEPAAVSEQGDKKGKKGKKDRDMDELKKEVSMDDHKLSLDELHRKYGTDLSRGLTSARAAEILARDGPNALTPPPTTPEWIKFCRQLFGGFSMLLWIGAILCFLAYSIQAATEEEPQNDNLYLGVVLSAVVIITGCFSYYQEAKSSKIMESFKNMVPQQALVIRNGEKMSINAEEVVVGDLVEVKGGDRIPADLRIISANGCKVDNSSLTGESEPQTRSPDFTNENPLETRNIAFFSTNCVEGTARGIVVYTGDRTVMGRIATLASGLEGGQTPIAAEIEHFIHIITGVAVFLGVSFFILSLILEYTWLEAVIFLIGIIVANVPEGLLATVTVCLTLTAKRMARKNCLVKNLEAVETLGSTSTICSDKTGTLTQNRMTVAHMWFDNQIHEADTTENQSGVSFDKTSATWLALSRIAGLCNRAVFQANQENLPILKRAVAGDASESALLKCIELCCGSVKEMRERYAKIVEIPFNSTNKYQLSIHKNPNTSEPQHLLVMKGAPERILDRCSSILLHGKEQPLDEELKDAFQNAYLELGGLGERVLGFCHLFLPDEQFPEGFQFDTDDVNFPIDNLCFVGLISMIDPPRAAVPDAVGKCRSAGIKVIMVTGDHPITAKAIAKGVGIISEGNETVEDIAARLNIPVSQVNPRDAKACVVHGSDLKDMTSEQLDDILKYHTEIVFARTSPQQKLIIVEGCQRQGAIVAVTGDGVNDSPALKKADIGVAMGIAGSDVSKQAADMILLDDNFASIVTGVEEGRLIFDNLKKSIAYTLTSNIPEITPFLIFIIANIPLPLGTVTILCIDLGTDMVPAISLAYEQAESDIMKRQPRNPKTDKLVNERLISMAYGQIGMIQALGGFFTYFVILAENGFLPIHLLGLRVDWDDRWINDVEDSYGQQWTYEQRKIVEFTCHTAFFVSIVVVQWADLVICKTRRNSVFQQGMKNKILIFGLFEETALAAFLSYCPGMGVALRMYPLKPTWWFCAFPYSLLIFVYDEVRKLIIRRRPGGWVEKETYY.

Residues Met-1–Val-5 constitute a propeptide that is removed on maturation. Over residues Met-1–Glu-11 the composition is skewed to basic and acidic residues. Positions Met-1–Val-39 are disordered. Topologically, residues Gly-6 to Pro-87 are cytoplasmic. Lys-9 is modified (N6-acetyllysine). Tyr-10 carries the phosphotyrosine modification. Ser-16 is subject to Phosphoserine. Lys-21 is subject to N6-acetyllysine. Over residues Lys-28 to Val-39 the composition is skewed to basic and acidic residues. Phosphoserine occurs at positions 40 and 47. A phosphoinositide-3 kinase binding region spans residues Pro-82–Pro-84. The chain crosses the membrane as a helical span at residues Glu-88–Ala-108. The Extracellular portion of the chain corresponds to Ile-109–Tyr-131. The helical transmembrane segment at Leu-132–Ala-152 threads the bilayer. The Cytoplasmic segment spans residues Lys-153 to Ile-288. Residues Ser-216 to Asn-235 are disordered. Ser-228 carries the phosphoserine modification. Tyr-260 is modified (phosphotyrosine). Residues Glu-289–Ile-308 form a helical membrane-spanning segment. The Extracellular segment spans residues Leu-309–Ala-320. The chain crosses the membrane as a helical span at residues Val-321–Ala-338. Over Thr-339–Leu-772 the chain is Cytoplasmic. Asp-376 acts as the 4-aspartylphosphate intermediate in catalysis. A phosphoserine mark is found at Ser-452 and Ser-484. Lys-487 is an ATP binding site. Tyr-542 is subject to Phosphotyrosine. The interval Arg-596–Asp-717 is mediates interaction with SCN7A. N6-succinyllysine is present on Lys-661. 2 positions are modified to phosphoserine: Ser-668 and Ser-675. Mg(2+)-binding residues include Asp-717 and Asp-721. The chain crosses the membrane as a helical span at residues Lys-773 to Ile-792. Over Phe-793–Leu-802 the chain is Extracellular. A helical transmembrane segment spans residues Gly-803–Ala-823. The Cytoplasmic segment spans residues Tyr-824–Lys-843. The chain crosses the membrane as a helical span at residues Leu-844–Phe-866. The Extracellular portion of the chain corresponds to Phe-867 to Cys-918. A helical transmembrane segment spans residues His-919–Lys-938. Residues Thr-939–Asn-951 lie on the Cytoplasmic side of the membrane. Position 943 is a phosphoserine; by PKA (Ser-943). A helical membrane pass occupies residues Lys-952 to Tyr-970. The Extracellular segment spans residues Cys-971–Pro-985. Residues Thr-986 to Lys-1006 form a helical membrane-spanning segment. Topologically, residues Leu-1007–Tyr-1023 are cytoplasmic.

The protein belongs to the cation transport ATPase (P-type) (TC 3.A.3) family. Type IIC subfamily. In terms of assembly, the sodium/potassium-transporting ATPase is composed of a catalytic alpha subunit, an auxiliary non-catalytic beta subunit and an additional regulatory subunit. Interacts with regulatory subunit FXYD1. Interacts with regulatory subunit FXYD3. Interacts with SIK1. Binds the HLA class II histocompatibility antigen DR1. Interacts with SLC35G1 and STIM1. Interacts with CLN3; this interaction regulates the sodium/potassium-transporting ATPase complex localization at the plasma membrane. Interacts with SCN7A; activates ATP1A1 P-type sodium:potassium-exchanging transporter activity which indirectly signals to nearby neurons to regulate sodium homeostasis. In terms of processing, phosphorylation on Tyr-10 modulates pumping activity. Phosphorylation of Ser-943 by PKA modulates the response of ATP1A1 to PKC. Dephosphorylation by protein phosphatase 2A (PP2A) following increases in intracellular sodium, leading to increase catalytic activity.

The protein resides in the cell membrane. It localises to the basolateral cell membrane. Its subcellular location is the sarcolemma. The protein localises to the cell projection. It is found in the axon. The protein resides in the melanosome. The enzyme catalyses K(+)(out) + Na(+)(in) + ATP + H2O = K(+)(in) + Na(+)(out) + ADP + phosphate + H(+). Functionally, this is the catalytic component of the active enzyme, which catalyzes the hydrolysis of ATP coupled with the exchange of sodium and potassium ions across the plasma membrane. This action creates the electrochemical gradient of sodium and potassium ions, providing the energy for active transport of various nutrients. Could also be part of an osmosensory signaling pathway that senses body-fluid sodium levels and controls salt intake behavior as well as voluntary water intake to regulate sodium homeostasis. The protein is Sodium/potassium-transporting ATPase subunit alpha-1 (ATP1A1) of Homo sapiens (Human).